The chain runs to 267 residues: Acyl-[acyl-carrier-protein]--UDP-N-acetylglucosamine O-acyltransferase (267 aa).

This sequence belongs to the transferase hexapeptide repeat family. LpxA subfamily. Homotrimer.

It is found in the cytoplasm. The enzyme catalyses a (3R)-hydroxyacyl-[ACP] + UDP-N-acetyl-alpha-D-glucosamine = a UDP-3-O-[(3R)-3-hydroxyacyl]-N-acetyl-alpha-D-glucosamine + holo-[ACP]. Its pathway is glycolipid biosynthesis; lipid IV(A) biosynthesis; lipid IV(A) from (3R)-3-hydroxytetradecanoyl-[acyl-carrier-protein] and UDP-N-acetyl-alpha-D-glucosamine: step 1/6. In terms of biological role, involved in the biosynthesis of lipid A, a phosphorylated glycolipid that anchors the lipopolysaccharide to the outer membrane of the cell. The chain is Acyl-[acyl-carrier-protein]--UDP-N-acetylglucosamine O-acyltransferase from Cupriavidus metallidurans (strain ATCC 43123 / DSM 2839 / NBRC 102507 / CH34) (Ralstonia metallidurans).